The following is a 501-amino-acid chain: Aldehyde dehydrogenase 1A1 (501 aa).

S2 is modified (N-acetylserine). K91 and K128 each carry N6-acetyllysine. NAD(+)-binding positions include 167–170 (IPWN), 193–196 (KPAE), 226–227 (GP), and 246–247 (GS). An N6-acetyllysine modification is found at K252. The active-site Proton acceptor is the E269. 269–271 (ELG) lines the NAD(+) pocket. C303 serves as the catalytic Nucleophile. Positions 336-501 (LTQGINQGPQ…VAMKISQKNS (166 aa)) are mediates interaction with PRMT3. T337 bears the Phosphothreonine mark. NAD(+) is bound at residue 349-353 (EQHDK). Residues K353 and K367 each carry the N6-acetyllysine modification. 400–402 (EIF) contributes to the NAD(+) binding site. Position 410 is an N6-acetyllysine (K410). S413 carries the phosphoserine modification. N6-acetyllysine occurs at positions 419, 435, and 495.

It belongs to the aldehyde dehydrogenase family. Homotetramer. Interacts with PRMT3; the interaction is direct, inhibits ALDH1A1 aldehyde dehydrogenase activity and is independent of the methyltransferase activity of PRMT3. Post-translationally, the N-terminus is blocked most probably by acetylation. As to expression, strongly expressed in kidney, lung, testis, intestine, stomach, and trachea, but weakly in the liver.

The protein resides in the cytoplasm. The protein localises to the cytosol. Its subcellular location is the cell projection. It localises to the axon. It catalyses the reaction an aldehyde + NAD(+) + H2O = a carboxylate + NADH + 2 H(+). The enzyme catalyses all-trans-retinal + NAD(+) + H2O = all-trans-retinoate + NADH + 2 H(+). It carries out the reaction 9-cis-retinal + NAD(+) + H2O = 9-cis-retinoate + NADH + 2 H(+). The catalysed reaction is 11-cis-retinal + NAD(+) + H2O = 11-cis-retinoate + NADH + 2 H(+). It catalyses the reaction 13-cis-retinal + NAD(+) + H2O = 13-cis-retinoate + NADH + 2 H(+). The enzyme catalyses 3-deoxyglucosone + NAD(+) + H2O = 2-dehydro-3-deoxy-D-gluconate + NADH + 2 H(+). It carries out the reaction (E)-4-hydroxynon-2-enal + NAD(+) + H2O = (E)-4-hydroxynon-2-enoate + NADH + 2 H(+). The catalysed reaction is malonaldehyde + NAD(+) + H2O = 3-oxopropanoate + NADH + 2 H(+). It catalyses the reaction hexanal + NAD(+) + H2O = hexanoate + NADH + 2 H(+). The enzyme catalyses propanal + NAD(+) + H2O = propanoate + NADH + 2 H(+). It carries out the reaction acetaldehyde + NAD(+) + H2O = acetate + NADH + 2 H(+). The catalysed reaction is benzaldehyde + NAD(+) + H2O = benzoate + NADH + 2 H(+). It catalyses the reaction 4-aminobutanal + NAD(+) + H2O = 4-aminobutanoate + NADH + 2 H(+). It participates in cofactor metabolism; retinol metabolism. With respect to regulation, inhibited by chloral hydrate. Functionally, cytosolic dehydrogenase that catalyzes the irreversible oxidation of a wide range of aldehydes to their corresponding carboxylic acid. Functions downstream of retinol dehydrogenases and catalyzes the oxidation of retinaldehyde into retinoic acid, the second step in the oxidation of retinol/vitamin A into retinoic acid. This pathway is crucial to control the levels of retinol and retinoic acid, two important molecules which excess can be teratogenic and cytotoxic. Also oxidizes aldehydes resulting from lipid peroxidation like (E)-4-hydroxynon-2-enal/HNE, malonaldehyde and hexanal that form protein adducts and are highly cytotoxic. By participating for instance to the clearance of (E)-4-hydroxynon-2-enal/HNE in the lens epithelium prevents the formation of HNE-protein adducts and lens opacification. Functions also downstream of fructosamine-3-kinase in the fructosamine degradation pathway by catalyzing the oxidation of 3-deoxyglucosone, the carbohydrate product of fructosamine 3-phosphate decomposition, which is itself a potent glycating agent that may react with lysine and arginine side-chains of proteins. Also has an aminobutyraldehyde dehydrogenase activity and is probably part of an alternative pathway for the biosynthesis of GABA/4-aminobutanoate in midbrain, thereby playing a role in GABAergic synaptic transmission. The polypeptide is Aldehyde dehydrogenase 1A1 (Rattus norvegicus (Rat)).